Reading from the N-terminus, the 659-residue chain is Replication protein E1 (659 aa).

A disordered region spans residues R30 to P57. Positions S36–F52 are enriched in acidic residues. The Nuclear localization signal signature appears at K85 to K87. Residues S91, S95, S108, and S121 each carry the phosphoserine; by host modification. A Nuclear export signal motif is present at residues L107–L116. The segment at G134–V195 is disordered. Over residues Y135–G160 the composition is skewed to polar residues. Positions Q196–E362 are DNA-binding region. An SF3 helicase domain is found at V461–L611. G487–S494 contacts ATP. K568 participates in a covalent cross-link: Glycyl lysine isopeptide (Lys-Gly) (interchain with G-Cter in SUMO). Positions D634–V659 are disordered.

The protein belongs to the papillomaviridae E1 protein family. In terms of assembly, can form hexamers. Interacts with E2 protein; this interaction increases E1 DNA binding specificity. Interacts with host DNA polymerase subunit POLA2. Interacts with host single stranded DNA-binding protein RPA1. Interacts with host TOP1; this interaction stimulates the enzymatic activity of TOP1. Phosphorylated. Post-translationally, sumoylated.

The protein resides in the host nucleus. The enzyme catalyses Couples ATP hydrolysis with the unwinding of duplex DNA by translocating in the 3'-5' direction.. The catalysed reaction is ATP + H2O = ADP + phosphate + H(+). Its function is as follows. ATP-dependent DNA 3'-5' helicase required for initiation of viral DNA replication. It forms a complex with the viral E2 protein. The E1-E2 complex binds to the replication origin which contains binding sites for both proteins. During the initial step, a dimer of E1 interacts with a dimer of protein E2 leading to a complex that binds the viral origin of replication with high specificity. Then, a second dimer of E1 displaces the E2 dimer in an ATP-dependent manner to form the E1 tetramer. Following this, two E1 monomers are added to each half of the site, which results in the formation of two E1 trimers on the viral ori. Subsequently, two hexamers will be created. The double hexamer acts as a bi-directional helicase machinery and unwinds the viral DNA and then recruits the host DNA polymerase to start replication. The chain is Replication protein E1 from Homo sapiens (Human).